Reading from the N-terminus, the 245-residue chain is Orotidine 5'-phosphate decarboxylase (245 aa).

Substrate-binding positions include aspartate 22, lysine 44, 71-80 (DLKFHDIPNT), threonine 131, arginine 192, glutamine 201, glycine 221, and arginine 222. The active-site Proton donor is the lysine 73.

This sequence belongs to the OMP decarboxylase family. Type 1 subfamily. As to quaternary structure, homodimer.

It catalyses the reaction orotidine 5'-phosphate + H(+) = UMP + CO2. It functions in the pathway pyrimidine metabolism; UMP biosynthesis via de novo pathway; UMP from orotate: step 2/2. Functionally, catalyzes the decarboxylation of orotidine 5'-monophosphate (OMP) to uridine 5'-monophosphate (UMP). The chain is Orotidine 5'-phosphate decarboxylase from Yersinia pseudotuberculosis serotype O:1b (strain IP 31758).